Consider the following 234-residue polypeptide: Accessory gland protein Acp29AB (234 aa).

The first 21 residues, 1 to 21 (MYATNLLYLLALWNLWLVSGG), serve as a signal peptide directing secretion. Asn29, Asn61, Asn127, and Asn164 each carry an N-linked (GlcNAc...) asparagine glycan. One can recognise a C-type lectin domain in the interval 137–234 (VTCREMNGHL…SFVCQANQWA (98 aa)). Disulfide bonds link Cys139–Cys228 and Cys207–Cys220.

It is found in the secreted. Functionally, responsible for physiological and behavioral changes in mated female flies. The protein is Accessory gland protein Acp29AB (Acp29AB) of Drosophila simulans (Fruit fly).